A 123-amino-acid polypeptide reads, in one-letter code: U7 snRNA-associated Sm-like protein LSm10 (123 aa).

One can recognise a Sm domain in the interval 16 to 88 (SLIILLQGLQ…VRYVHIPDDV (73 aa)).

It belongs to the snRNP Sm proteins family. As to quaternary structure, component of the heptameric ring U7 snRNP complex, or U7 Sm protein core complex, at least composed of LSM10, LSM11, SNRPB, SNRPD3, SNRPE, SNRPF, SNRPG and U7 snRNA. Formation of the U7 snRNP is an ATP-dependent process mediated by a specialized SMN complex containing at least the Sm protein core complex and additionally, the U7-specific LSM10 and LSM11 proteins. Interacts with CLNS1A and SMN. In terms of processing, not methylated. Methylation is not necessary for interaction with SMN.

It localises to the nucleus. Its function is as follows. Appears to function in the U7 snRNP complex that is involved in histone 3'-end processing. Increases U7 snRNA levels but not histone 3'-end pre-mRNA processing activity, when overexpressed. Required for cell cycle progression from G1 to S phases. Binds specifically to U7 snRNA. Binds to the downstream cleavage product (DCP) of histone pre-mRNA in a U7 snRNP dependent manner. The polypeptide is U7 snRNA-associated Sm-like protein LSm10 (LSM10) (Homo sapiens (Human)).